Here is a 308-residue protein sequence, read N- to C-terminus: 4-hydroxy-tetrahydrodipicolinate synthase (308 aa).

Residue threonine 56 participates in pyruvate binding. Residue tyrosine 144 is the Proton donor/acceptor of the active site. Lysine 172 acts as the Schiff-base intermediate with substrate in catalysis. Valine 212 contacts pyruvate.

Belongs to the DapA family. Homotetramer; dimer of dimers.

It localises to the cytoplasm. It carries out the reaction L-aspartate 4-semialdehyde + pyruvate = (2S,4S)-4-hydroxy-2,3,4,5-tetrahydrodipicolinate + H2O + H(+). The protein operates within amino-acid biosynthesis; L-lysine biosynthesis via DAP pathway; (S)-tetrahydrodipicolinate from L-aspartate: step 3/4. Functionally, catalyzes the condensation of (S)-aspartate-beta-semialdehyde [(S)-ASA] and pyruvate to 4-hydroxy-tetrahydrodipicolinate (HTPA). This chain is 4-hydroxy-tetrahydrodipicolinate synthase, found in Kineococcus radiotolerans (strain ATCC BAA-149 / DSM 14245 / SRS30216).